The primary structure comprises 81 residues: uncharacterized protein (81 aa).

This is an uncharacterized protein from Acidianus bottle-shaped virus (isolate Italy/Pozzuoli) (ABV).